Here is a 144-residue protein sequence, read N- to C-terminus: Flagellar assembly factor FliW (144 aa).

Belongs to the FliW family. Interacts with translational regulator CsrA and flagellin(s).

The protein resides in the cytoplasm. Its function is as follows. Acts as an anti-CsrA protein, binds CsrA and prevents it from repressing translation of its target genes, one of which is flagellin. Binds to flagellin and participates in the assembly of the flagellum. This is Flagellar assembly factor FliW from Geobacillus kaustophilus (strain HTA426).